Here is a 448-residue protein sequence, read N- to C-terminus: Exodeoxyribonuclease 7 large subunit (448 aa).

This sequence belongs to the XseA family. In terms of assembly, heterooligomer composed of large and small subunits.

It localises to the cytoplasm. The catalysed reaction is Exonucleolytic cleavage in either 5'- to 3'- or 3'- to 5'-direction to yield nucleoside 5'-phosphates.. Functionally, bidirectionally degrades single-stranded DNA into large acid-insoluble oligonucleotides, which are then degraded further into small acid-soluble oligonucleotides. This is Exodeoxyribonuclease 7 large subunit from Geobacillus kaustophilus (strain HTA426).